Consider the following 770-residue polypeptide: Molybdenum cofactor sulfurase (770 aa).

The residue at position 243 (lysine 243) is an N6-(pyridoxal phosphate)lysine. Residue cysteine 405 is part of the active site. An MOSC domain is found at 611–769; it reads GDEVANWLCQ…LACGDPITVL (159 aa). Serine 726 bears the Phosphoserine mark.

This sequence belongs to the class-V pyridoxal-phosphate-dependent aminotransferase family. MOCOS subfamily. Requires pyridoxal 5'-phosphate as cofactor.

The enzyme catalyses Mo-molybdopterin + L-cysteine + AH2 = thio-Mo-molybdopterin + L-alanine + A + H2O. Its pathway is cofactor biosynthesis; molybdopterin biosynthesis. In terms of biological role, sulfurates the molybdenum cofactor. Sulfation of molybdenum is essential for xanthine dehydrogenase (XDH) and aldehyde oxidase (ADO) enzymes in which molybdenum cofactor is liganded by 1 oxygen and 1 sulfur atom in active form. This chain is Molybdenum cofactor sulfurase, found in Drosophila grimshawi (Hawaiian fruit fly).